A 442-amino-acid chain; its full sequence is Proline--tRNA ligase (442 aa).

It belongs to the class-II aminoacyl-tRNA synthetase family. ProS type 2 subfamily. In terms of assembly, homodimer.

The protein resides in the cytoplasm. It carries out the reaction tRNA(Pro) + L-proline + ATP = L-prolyl-tRNA(Pro) + AMP + diphosphate. Functionally, catalyzes the attachment of proline to tRNA(Pro) in a two-step reaction: proline is first activated by ATP to form Pro-AMP and then transferred to the acceptor end of tRNA(Pro). In Brucella anthropi (strain ATCC 49188 / DSM 6882 / CCUG 24695 / JCM 21032 / LMG 3331 / NBRC 15819 / NCTC 12168 / Alc 37) (Ochrobactrum anthropi), this protein is Proline--tRNA ligase.